We begin with the raw amino-acid sequence, 198 residues long: Guanylate kinase (198 aa).

The region spanning 8-188 (GRVVVLSGPS…ACSELVSLLV (181 aa)) is the Guanylate kinase-like domain. 15 to 22 (GPSAVGKS) lines the ATP pocket.

This sequence belongs to the guanylate kinase family.

The protein localises to the cytoplasm. The enzyme catalyses GMP + ATP = GDP + ADP. Essential for recycling GMP and indirectly, cGMP. This Mycobacterium sp. (strain MCS) protein is Guanylate kinase.